Consider the following 412-residue polypeptide: Divalent metal cation transporter MntH (412 aa).

Residues 1–19 (MTNYRVESSSGRAARKTRL) are Cytoplasmic-facing. A helical membrane pass occupies residues 20 to 39 (ALMGPAFIAAIGYIDPGNFA). At 40–51 (TNIQAGASFGYQ) the chain is on the periplasmic side. A helical transmembrane segment spans residues 52 to 71 (LLWVVVWANLMAMLIQILSA). At 72–95 (KLGIATGKNLAEQIRDHYPRPVVW) the chain is on the cytoplasmic side. The helical transmembrane segment at 96-118 (FYWVQAEIIAMATDLAEFIGAAI) threads the bilayer. Topologically, residues 119–125 (GFKLILG) are periplasmic. A helical membrane pass occupies residues 126–145 (VSLLQGAVLTGIATFLILML). At 146–155 (QRRGQKPLEK) the chain is on the cytoplasmic side. The helical transmembrane segment at 156–175 (VIGGLLLFVAAAYIVELIFS) threads the bilayer. The Periplasmic segment spans residues 176–196 (QPNLAQLGKGMVIPSLPTSEA). Residues 197-220 (VFLAAGVLGATIMPHVIYLHSSLT) traverse the membrane as a helical segment. The Cytoplasmic portion of the chain corresponds to 221–238 (QHLHGGSRQQRYSATKWD). The chain crosses the membrane as a helical span at residues 239 to 258 (VAIAMTIAGFVNLAMMATAA). The Periplasmic portion of the chain corresponds to 259–276 (AAFHFSGHTGVADLDEAY). Residues 277–297 (LTLQPLLSHAAATVFGLSLVA) form a helical membrane-spanning segment. Residues 298-327 (AGLSSTVVGTLAGQVVMQGFIRFHIPLWVR) lie on the Cytoplasmic side of the membrane. The helical transmembrane segment at 328 to 344 (RTVTMLPSFIVILMGLD) threads the bilayer. The Periplasmic portion of the chain corresponds to 345 to 350 (PTRILV). A helical transmembrane segment spans residues 351-370 (MSQVLLSFGIALALVPLLIF). Residues 371–387 (TSDSKLMGDLVNSKRVK) lie on the Cytoplasmic side of the membrane. The chain crosses the membrane as a helical span at residues 388–406 (QTGWVIVVLVVALNIWLLV). Over 407 to 412 (GTALGL) the chain is Periplasmic.

This sequence belongs to the NRAMP family.

It localises to the cell inner membrane. In terms of biological role, h(+)-stimulated, divalent metal cation uptake system. The chain is Divalent metal cation transporter MntH from Escherichia coli O9:H4 (strain HS).